The sequence spans 376 residues: Protein-glutamate methylesterase/protein-glutamine glutaminase (376 aa).

A Response regulatory domain is found at 5-122; sequence KVLIVDDSAL…QHTFEDYTDE (118 aa). Aspartate 56 is modified (4-aspartylphosphate). The 192-residue stretch at 185 to 376 folds into the CheB-type methylesterase domain; the sequence is SKPSHKVIAL…PEKILALIKK (192 aa). Active-site residues include serine 197, histidine 223, and aspartate 319.

Belongs to the CheB family. Post-translationally, phosphorylated by CheA. Phosphorylation of the N-terminal regulatory domain activates the methylesterase activity.

Its subcellular location is the cytoplasm. The enzyme catalyses [protein]-L-glutamate 5-O-methyl ester + H2O = L-glutamyl-[protein] + methanol + H(+). The catalysed reaction is L-glutaminyl-[protein] + H2O = L-glutamyl-[protein] + NH4(+). In terms of biological role, involved in chemotaxis. Part of a chemotaxis signal transduction system that modulates chemotaxis in response to various stimuli. Catalyzes the demethylation of specific methylglutamate residues introduced into the chemoreceptors (methyl-accepting chemotaxis proteins or MCP) by CheR. Also mediates the irreversible deamidation of specific glutamine residues to glutamic acid. The polypeptide is Protein-glutamate methylesterase/protein-glutamine glutaminase (Hydrogenovibrio crunogenus (strain DSM 25203 / XCL-2) (Thiomicrospira crunogena)).